The sequence spans 248 residues: Triosephosphate isomerase (248 aa).

Residue 14 to 16 coordinates substrate; it reads NWK. Catalysis depends on His99, which acts as the Electrophile. The active-site Proton acceptor is Glu170. Substrate-binding positions include Gly176, Ser212, and 233–234; that span reads GG.

This sequence belongs to the triosephosphate isomerase family. Homodimer.

It is found in the cytoplasm. It catalyses the reaction D-glyceraldehyde 3-phosphate = dihydroxyacetone phosphate. Its pathway is carbohydrate biosynthesis; gluconeogenesis. It functions in the pathway carbohydrate degradation; glycolysis; D-glyceraldehyde 3-phosphate from glycerone phosphate: step 1/1. In terms of biological role, involved in the gluconeogenesis. Catalyzes stereospecifically the conversion of dihydroxyacetone phosphate (DHAP) to D-glyceraldehyde-3-phosphate (G3P). This chain is Triosephosphate isomerase, found in Bordetella bronchiseptica (strain ATCC BAA-588 / NCTC 13252 / RB50) (Alcaligenes bronchisepticus).